A 449-amino-acid polypeptide reads, in one-letter code: Required for meiotic nuclear division protein 1 homolog (449 aa).

A mitochondrion-targeting transit peptide spans 1-12; that stretch reads MPATLLRAVARS.

This sequence belongs to the RMD1/sif2 family. Homooligomer.

It is found in the mitochondrion. Required for mitochondrial translation, possibly by coordinating the assembly or maintenance of the mitochondrial ribosome. This chain is Required for meiotic nuclear division protein 1 homolog (RMND1), found in Homo sapiens (Human).